A 228-amino-acid chain; its full sequence is Transcription termination/antitermination protein NusG (228 aa).

Belongs to the NusG family.

In terms of biological role, participates in transcription elongation, termination and antitermination. The chain is Transcription termination/antitermination protein NusG from Mycobacterium leprae (strain TN).